Reading from the N-terminus, the 2290-residue chain is Protein Ycf2 (2290 aa).

Residue 1644-1651 (GSIGTGRS) coordinates ATP.

The protein belongs to the Ycf2 family.

It localises to the plastid. It is found in the chloroplast stroma. Probable ATPase of unknown function. Its presence in a non-photosynthetic plant (Epifagus virginiana) and experiments in tobacco indicate that it has an essential function which is probably not related to photosynthesis. The protein is Protein Ycf2 of Nasturtium officinale (Watercress).